The primary structure comprises 282 residues: MPLFGAHMSAAGGVSNAIRDIVEIGGEVLQLFTANQRQWTPKAPSEADVEAFGRRRAAFGGPVFSHASYLINIANGDGAASAKAVEALVREFERCTALGVDAVVLHPGAHLGAGRGTGILRAARNIDEVFDRCGGQTPVLLLENTAGQGTCLGGDLNDLAEIIDASRHASQLGVCLDTAHAFGAGYALHTDEGYRRCMEDIEHGPGLAAVRLFHVNDSLVPCGSRKDRHTHIGEGQLGEAAFVRLLNDPVFAMHPMVLETPKEDGHAADRRNLATLRRLARS.

His-66, His-106, Glu-143, Asp-177, His-180, His-214, Asp-227, His-229, and Glu-259 together coordinate Zn(2+).

Belongs to the AP endonuclease 2 family. Zn(2+) serves as cofactor.

It catalyses the reaction Endonucleolytic cleavage to 5'-phosphooligonucleotide end-products.. Functionally, endonuclease IV plays a role in DNA repair. It cleaves phosphodiester bonds at apurinic or apyrimidinic (AP) sites, generating a 3'-hydroxyl group and a 5'-terminal sugar phosphate. The chain is Probable endonuclease 4 from Nitratidesulfovibrio vulgaris (strain ATCC 29579 / DSM 644 / CCUG 34227 / NCIMB 8303 / VKM B-1760 / Hildenborough) (Desulfovibrio vulgaris).